A 101-amino-acid chain; its full sequence is MMLEYVLGLSAYLFSIGIYGLITSRNMVRALMCLELILNAVNLNFVTFSDFFDSRQLKGNILSIFVISIAAAEAAIGPAIVSSIYRNRKSIRINQLNLLNK.

A run of 3 helical transmembrane segments spans residues 2 to 22 (MLEY…YGLI), 32 to 52 (MCLE…SDFF), and 61 to 81 (ILSI…PAIV).

Belongs to the complex I subunit 4L family. As to quaternary structure, NDH is composed of at least 16 different subunits, 5 of which are encoded in the nucleus.

It is found in the plastid. The protein resides in the chloroplast thylakoid membrane. It carries out the reaction a plastoquinone + NADH + (n+1) H(+)(in) = a plastoquinol + NAD(+) + n H(+)(out). It catalyses the reaction a plastoquinone + NADPH + (n+1) H(+)(in) = a plastoquinol + NADP(+) + n H(+)(out). Its function is as follows. NDH shuttles electrons from NAD(P)H:plastoquinone, via FMN and iron-sulfur (Fe-S) centers, to quinones in the photosynthetic chain and possibly in a chloroplast respiratory chain. The immediate electron acceptor for the enzyme in this species is believed to be plastoquinone. Couples the redox reaction to proton translocation, and thus conserves the redox energy in a proton gradient. The polypeptide is NAD(P)H-quinone oxidoreductase subunit 4L, chloroplastic (Populus alba (White poplar)).